A 761-amino-acid chain; its full sequence is Polyribonucleotide nucleotidyltransferase (761 aa).

The Mg(2+) site is built by aspartate 532 and aspartate 538. The KH domain occupies 598-657 (PRVISVQIPVDKIGELIGPKGKTINAIQDETGADISIDEDGTVYIGAVDGPSAEAARAQV). Positions 669-741 (GEQFLGTVVK…DRGKLSLAPV (73 aa)) constitute an S1 motif domain.

Belongs to the polyribonucleotide nucleotidyltransferase family. It depends on Mg(2+) as a cofactor.

The protein resides in the cytoplasm. The enzyme catalyses RNA(n+1) + phosphate = RNA(n) + a ribonucleoside 5'-diphosphate. Its function is as follows. Involved in mRNA degradation. Catalyzes the phosphorolysis of single-stranded polyribonucleotides processively in the 3'- to 5'-direction. In Leifsonia xyli subsp. xyli (strain CTCB07), this protein is Polyribonucleotide nucleotidyltransferase.